We begin with the raw amino-acid sequence, 100 residues long: Apolipoprotein C-II (100 aa).

An N-terminal signal peptide occupies residues 1-22 (MGSRFLLALFLVLLVLGCEVQA). Residues 66–74 (SVDEKLRDM) form a lipid binding region. The tract at residues 78–100 (SSAAMTTYASIFTDQIFTLLKGE) is lipoprotein lipase cofactor.

Belongs to the apolipoprotein C2 family. Proapolipoprotein C-II is synthesized as a sialic acid containing glycoprotein which is subsequently desialylated prior to its proteolytic processing. Post-translationally, proapolipoprotein C-II, the major form found in plasma undergoes proteolytic cleavage of its N-terminal hexapeptide to generate the mature form apolipoprotein C-II, which occurs as the minor form in plasma.

The protein resides in the secreted. Its function is as follows. Component of chylomicrons, very low-density lipoproteins (VLDL), low-density lipoproteins (LDL), and high-density lipoproteins (HDL) in plasma. Plays an important role in lipoprotein metabolism as an activator of lipoprotein lipase. The chain is Apolipoprotein C-II (APOC2) from Bramus lutescens (Transcaucasian mole vole).